The primary structure comprises 100 residues: MAFLLNNASISSHLRSSSSQKTGDALSISRRGFHIEPGTREKALLAEDSALKRFKSHKKSVHKLKRIGDVLTVVVVAGCCYEIYVKAVMKKEALAAGKSS.

The interval 1 to 25 is disordered; that stretch reads MAFLLNNASISSHLRSSSSQKTGDA. The N-terminal 32 residues, 1–32, are a transit peptide targeting the mitochondrion; it reads MAFLLNNASISSHLRSSSSQKTGDALSISRRG. Over residues 9–19 the composition is skewed to low complexity; that stretch reads SISSHLRSSSS.

In terms of assembly, component of complex II composed of eight subunits in plants: four classical SDH subunits SDH1, SDH2, SDH3 and SDH4 (a flavoprotein (FP), an iron-sulfur protein (IP), and a cytochrome b composed of a large and a small subunit.), as well as four subunits unknown in mitochondria from bacteria and heterotrophic eukaryotes.

It localises to the mitochondrion inner membrane. The protein operates within carbohydrate metabolism; tricarboxylic acid cycle. In Arabidopsis thaliana (Mouse-ear cress), this protein is Succinate dehydrogenase subunit 7B, mitochondrial.